Here is a 320-residue protein sequence, read N- to C-terminus: Mitochondrial fission regulator 1-like-B (320 aa).

The segment at 1 to 37 is disordered; it reads MASLGAAAEPERSLFGKDGAEACESPEGRRSGRRKRT. Over residues 9-30 the composition is skewed to basic and acidic residues; it reads EPERSLFGKDGAEACESPEGRR.

The protein belongs to the MTFR1 family.

Its subcellular location is the mitochondrion outer membrane. In terms of biological role, mitochondrial protein required for adaptation of miochondrial dynamics to metabolic changes. Regulates mitochondrial morphology at steady state and mediates AMPK-dependent stress-induced mitochondrial fragmentation via the control of OPA1 levels. In Xenopus laevis (African clawed frog), this protein is Mitochondrial fission regulator 1-like-B (mtfr1l-b).